We begin with the raw amino-acid sequence, 418 residues long: Transcription termination factor Rho (418 aa).

Residues 48 to 123 enclose the Rho RNA-BD domain; that stretch reads SIFGEGTLEV…VKVDKVNGEA (76 aa). Residues 169–174, 181–186, and arginine 212 contribute to the ATP site; these read GKGQRA and KSGKTV.

It belongs to the Rho family. Homohexamer. The homohexamer assembles into an open ring structure.

In terms of biological role, facilitates transcription termination by a mechanism that involves Rho binding to the nascent RNA, activation of Rho's RNA-dependent ATPase activity, and release of the mRNA from the DNA template. The sequence is that of Transcription termination factor Rho from Chromobacterium violaceum (strain ATCC 12472 / DSM 30191 / JCM 1249 / CCUG 213 / NBRC 12614 / NCIMB 9131 / NCTC 9757 / MK).